A 449-amino-acid chain; its full sequence is tRNA-2-methylthio-N(6)-dimethylallyladenosine synthase (449 aa).

The region spanning 4–119 (RTFHIETFGC…APQALDRLVE (116 aa)) is the MTTase N-terminal domain. Residues Cys13, Cys48, Cys82, Cys158, Cys162, and Cys165 each contribute to the [4Fe-4S] cluster site. The Radical SAM core domain occupies 144-375 (GAVPASVFVN…QTLQNRLTER (232 aa)). The TRAM domain occupies 378 to 446 (QDMVGKKVEV…KHSLLAEQAG (69 aa)).

Belongs to the methylthiotransferase family. MiaB subfamily. In terms of assembly, monomer. [4Fe-4S] cluster serves as cofactor.

Its subcellular location is the cytoplasm. It catalyses the reaction N(6)-dimethylallyladenosine(37) in tRNA + (sulfur carrier)-SH + AH2 + 2 S-adenosyl-L-methionine = 2-methylsulfanyl-N(6)-dimethylallyladenosine(37) in tRNA + (sulfur carrier)-H + 5'-deoxyadenosine + L-methionine + A + S-adenosyl-L-homocysteine + 2 H(+). In terms of biological role, catalyzes the methylthiolation of N6-(dimethylallyl)adenosine (i(6)A), leading to the formation of 2-methylthio-N6-(dimethylallyl)adenosine (ms(2)i(6)A) at position 37 in tRNAs that read codons beginning with uridine. The sequence is that of tRNA-2-methylthio-N(6)-dimethylallyladenosine synthase from Nitratidesulfovibrio vulgaris (strain DP4) (Desulfovibrio vulgaris).